Here is a 418-residue protein sequence, read N- to C-terminus: Sonic hedgehog protein (418 aa).

A signal peptide spans 1–23 (MRLLTRVLLVSLLTLSLVVSGLA). Residue Cys-24 is the site of N-palmitoyl cysteine attachment. A Cardin-Weintraub motif is present at residues 32 to 38 (RRRHPKK). Ca(2+) contacts are provided by Glu-89, Glu-90, Asp-95, Thr-125, Glu-126, Asp-129, and Asp-131. Zn(2+) contacts are provided by His-140, Asp-147, and His-182. Residue Gly-197 is the site of Cholesterol glycine ester attachment.

This sequence belongs to the hedgehog family. Interacts with HHATL/GUP1 which negatively regulates HHAT-mediated palmitoylation of the SHH N-terminus. Interacts with BOC and CDON. Interacts with HHIP. Interacts with DISP1 via its cholesterol anchor. Interacts with SCUBE2. In terms of assembly, multimer. Post-translationally, the C-terminal domain displays an autoproteolysis activity and a cholesterol transferase activity. Both activities result in the cleavage of the full-length protein and covalent attachment of a cholesterol moiety to the C-terminal of the newly generated N-terminal fragment (ShhN). Cholesterylation is required for the sonic hedgehog protein N-product targeting to lipid rafts and multimerization. ShhN is the active species in both local and long-range signaling, whereas the C-product (ShhC) is degraded in the reticulum endoplasmic. In terms of processing, N-palmitoylation by HHAT of ShhN is required for sonic hedgehog protein N-product multimerization and full activity. It is a prerequisite for the membrane-proximal positioning and the subsequent shedding of this N-terminal peptide. The lipidated N- and C-terminal peptides of ShhNp can be cleaved (shedding). The N-terminal palmitoylated peptide is cleaved at the Cardin-Weintraub (CW) motif site. The cleavage reduced the interactions with heparan sulfate. The cleavage is enhanced by SCUBE2. Expressed in the ventral midline of the neural tube and brain. Also found in the notochord and in developing fin bud. In the developing brain, expression occurs in domains that include a discrete region in the floor of the diencephalon.

It is found in the endoplasmic reticulum membrane. The protein localises to the golgi apparatus membrane. The protein resides in the cell membrane. The catalysed reaction is glycyl-L-cysteinyl-[protein] + cholesterol + H(+) = [protein]-C-terminal glycyl cholesterol ester + N-terminal L-cysteinyl-[protein]. The C-terminal part of the sonic hedgehog protein precursor displays an autoproteolysis and a cholesterol transferase activity. Both activities result in the cleavage of the full-length protein into two parts (ShhN and ShhC) followed by the covalent attachment of a cholesterol moiety to the C-terminal of the newly generated ShhN. Both activities occur in the endoplasmic reticulum. Once cleaved, ShhC is degraded in the endoplasmic reticulum. In terms of biological role, the dually lipidated sonic hedgehog protein N-product (ShhNp) is a morphogen which is essential for a variety of patterning events during development. Involved in dorso-ventral patterning of the brain and in early patterning of the developing eyes. Binds to the patched (PTCH1) receptor, which functions in association with smoothened (SMO), to activate the transcription of target genes. In the absence of SHH, PTCH1 represses the constitutive signaling activity of SMO. The polypeptide is Sonic hedgehog protein (shha) (Danio rerio (Zebrafish)).